Consider the following 468-residue polypeptide: MSTRETFKISLLAKMPKDVINQFLSKDKTPFSVLFLSLLVGILAGLVGTYFEQAVHLVSETRTDWLKSEIGSFLPLWLAAFLISAFLAFIGYFLVHRFAPEAAGSGIPEIEGAMDGMRPVRWWRVLPVKFFGGMGALGSGMVLGREGPTVQMGGAVGRMISDIFRVKNEDTRHSLLAAGAAGGLAAAFNAPLAGIMFVIEEMRPQFRYTLISVRAVIISAVAANIVFRVINGQDAVITMPQYDAPELSTLGLFLLLGALFGVFGVLFNYLITLAQDLFVKFHRNDRKRYLLTGSMIGGCFGLLLLYVPELTGGGISLIPTITNGGYGAGILLLLFVGRIFTTLLCFGSGAPGGIFAPMLALGTLFGYAFGLIAKVWFPELNIEPGMFAIAGMGALFAATVRAPITGILLVIEMTNNYHLILPLIITSLGAVIFAQLLGGQPIYSQLLHRTLKNQKLQQQDLPPQSPNS.

Residues 1–30 (MSTRETFKISLLAKMPKDVINQFLSKDKTP) are Cytoplasmic-facing. The helical transmembrane segment at 31–67 (FSVLFLSLLVGILAGLVGTYFEQAVHLVSETRTDWLK) threads the bilayer. At 68-74 (SEIGSFL) the chain is on the periplasmic side. A helical membrane pass occupies residues 75-98 (PLWLAAFLISAFLAFIGYFLVHRF). The Selectivity filter part_1 signature appears at 104-108 (GSGIP). Ser-105 is a binding site for chloride. The helical intramembrane region spans 107–114 (IPEIEGAM). At 115-121 (DGMRPVR) the chain is on the cytoplasmic side. Helical transmembrane passes span 122–139 (WWRV…ALGS) and 146–164 (EGPT…SDIF). Positions 144-148 (GREGP) match the Selectivity filter part_2 motif. The Cytoplasmic segment spans residues 165–174 (RVKNEDTRHS). Intramembrane regions (helical) lie at residues 175–187 (LLAA…LAAA) and 191–199 (PLAGIMFVI). The Cytoplasmic segment spans residues 200 to 212 (EEMRPQFRYTLIS). A helical transmembrane segment spans residues 213-230 (VRAVIISAVAANIVFRVI). The Periplasmic portion of the chain corresponds to 231 to 250 (NGQDAVITMPQYDAPELSTL). A helical membrane pass occupies residues 251 to 279 (GLFLLLGALFGVFGVLFNYLITLAQDLFV). Topologically, residues 280–285 (KFHRND) are cytoplasmic. A helical membrane pass occupies residues 286–307 (RKRYLLTGSMIGGCFGLLLLYV). Residues 308-327 (PELTGGGISLIPTITNGGYG) are Periplasmic-facing. 2 helical membrane passes run 328–347 (AGIL…LCFG) and 353–374 (GIFA…LIAK). Positions 353-357 (GIFAP) match the Selectivity filter part_3 motif. Chloride-binding residues include Ile-354 and Phe-355. Residues 375-384 (VWFPELNIEP) are Periplasmic-facing. The helical intramembrane region spans 385–399 (GMFAIAGMGALFAAT). The note=Loop between two helices intramembrane region spans 400-402 (VRA). The helical intramembrane region spans 403-414 (PITGILLVIEMT). Residues 415 to 419 (NNYHL) constitute an intramembrane region (note=Loop between two helices). The helical transmembrane segment at 420–436 (ILPLIITSLGAVIFAQL) threads the bilayer. Over 437–468 (LGGQPIYSQLLHRTLKNQKLQQQDLPPQSPNS) the chain is Cytoplasmic. Tyr-443 provides a ligand contact to chloride.

It belongs to the chloride channel (TC 2.A.49) family. ClcA subfamily. As to quaternary structure, homodimer.

The protein localises to the cell inner membrane. The catalysed reaction is 2 chloride(in) + H(+)(out) = 2 chloride(out) + H(+)(in). In terms of biological role, proton-coupled chloride transporter. Functions as antiport system and exchanges two chloride ions for 1 proton. Probably acts as an electrical shunt for an outwardly-directed proton pump that is linked to amino acid decarboxylation, as part of the extreme acid resistance (XAR) response. This Vibrio cholerae serotype O1 (strain ATCC 39541 / Classical Ogawa 395 / O395) protein is H(+)/Cl(-) exchange transporter ClcA.